A 426-amino-acid polypeptide reads, in one-letter code: Serine--tRNA ligase (426 aa).

231–233 (TAE) contributes to the L-serine binding site. 262–264 (RSE) contacts ATP. E285 serves as a coordination point for L-serine. ATP is bound at residue 349–352 (EISS). Residue S385 coordinates L-serine.

Belongs to the class-II aminoacyl-tRNA synthetase family. Type-1 seryl-tRNA synthetase subfamily. Homodimer. The tRNA molecule binds across the dimer.

Its subcellular location is the cytoplasm. It catalyses the reaction tRNA(Ser) + L-serine + ATP = L-seryl-tRNA(Ser) + AMP + diphosphate + H(+). The catalysed reaction is tRNA(Sec) + L-serine + ATP = L-seryl-tRNA(Sec) + AMP + diphosphate + H(+). It participates in aminoacyl-tRNA biosynthesis; selenocysteinyl-tRNA(Sec) biosynthesis; L-seryl-tRNA(Sec) from L-serine and tRNA(Sec): step 1/1. Catalyzes the attachment of serine to tRNA(Ser). Is also able to aminoacylate tRNA(Sec) with serine, to form the misacylated tRNA L-seryl-tRNA(Sec), which will be further converted into selenocysteinyl-tRNA(Sec). The polypeptide is Serine--tRNA ligase (Lysinibacillus sphaericus (strain C3-41)).